Reading from the N-terminus, the 179-residue chain is ATP synthase subunit delta (179 aa).

It belongs to the ATPase delta chain family. In terms of assembly, F-type ATPases have 2 components, F(1) - the catalytic core - and F(0) - the membrane proton channel. F(1) has five subunits: alpha(3), beta(3), gamma(1), delta(1), epsilon(1). F(0) has three main subunits: a(1), b(2) and c(10-14). The alpha and beta chains form an alternating ring which encloses part of the gamma chain. F(1) is attached to F(0) by a central stalk formed by the gamma and epsilon chains, while a peripheral stalk is formed by the delta and b chains.

Its subcellular location is the cell membrane. F(1)F(0) ATP synthase produces ATP from ADP in the presence of a proton or sodium gradient. F-type ATPases consist of two structural domains, F(1) containing the extramembraneous catalytic core and F(0) containing the membrane proton channel, linked together by a central stalk and a peripheral stalk. During catalysis, ATP synthesis in the catalytic domain of F(1) is coupled via a rotary mechanism of the central stalk subunits to proton translocation. Functionally, this protein is part of the stalk that links CF(0) to CF(1). It either transmits conformational changes from CF(0) to CF(1) or is implicated in proton conduction. The polypeptide is ATP synthase subunit delta (Staphylococcus aureus (strain USA300 / TCH1516)).